The following is a 313-amino-acid chain: Probable myosin light chain kinase DDB_G0292624 (313 aa).

A Protein kinase domain is found at 6–264 (YELHKEIGKG…AKQALEHPWI (259 aa)). ATP contacts are provided by residues 12–20 (IGKGAFSVV) and K35. Catalysis depends on D125, which acts as the Proton acceptor.

Belongs to the protein kinase superfamily. CAMK Ser/Thr protein kinase family. CaMK subfamily.

It catalyses the reaction L-seryl-[myosin light chain] + ATP = O-phospho-L-seryl-[myosin light chain] + ADP + H(+). It carries out the reaction L-threonyl-[myosin light chain] + ATP = O-phospho-L-threonyl-[myosin light chain] + ADP + H(+). Its activity is regulated as follows. Does not have a calmodulin-binding domain. In terms of biological role, may phosphorylate a specific serine in the N-terminus of a myosin light chain. The polypeptide is Probable myosin light chain kinase DDB_G0292624 (Dictyostelium discoideum (Social amoeba)).